The sequence spans 739 residues: Prestin (739 aa).

Residues 1 to 76 (MEHVTVSEEP…PILTWLPSYP (76 aa)) are Cytoplasmic-facing. Residues 77–106 (LKEYLFGDIVSGISTGVMQLPQGLAYAMLA) form a helical membrane-spanning segment. Residues 107-109 (AVP) lie on the Extracellular side of the membrane. Residues 110-127 (PVFGLYSSFYPVLLYTFF) traverse the membrane as a helical segment. Residues 128–138 (GTSKHISIGTF) lie on the Cytoplasmic side of the membrane. Residues 139 to 152 (AVISLMIGGVAVRE) form a helical membrane-spanning segment. The Extracellular portion of the chain corresponds to 153 to 169 (APDSMFMVNGTNSSLVV). Asparagine 161 and asparagine 164 each carry an N-linked (GlcNAc...) asparagine glycan. The helical transmembrane segment at 170 to 199 (NIEARDSRRVEVVVALTTLVGIIQFVLGLL) threads the bilayer. Over 200–209 (RFGFLAIYLT) the chain is Cytoplasmic. The helical transmembrane segment at 210–233 (EPLVRGFTTAAAVHVSVSQLKYLL) threads the bilayer. Topologically, residues 234–244 (GVKTARFNGPL) are extracellular. Residues 245-256 (SVVYSLDAVLRN) constitute an intramembrane region (helical). Over 257-261 (IADTN) the chain is Extracellular. The chain crosses the membrane as a helical span at residues 262 to 285 (IVTLIIGLGCTVFLYIIKQLNERF). The Cytoplasmic portion of the chain corresponds to 286–294 (KKKLLIPIP). The helical transmembrane segment at 295 to 310 (GEIIVVIVSTGISYGM) threads the bilayer. Residues 311–335 (LMSENYGVDVVGKIPTGLLPPKVPD) lie on the Extracellular side of the membrane. The chain crosses the membrane as a helical span at residues 336-370 (FSVFPNLFADAVPIAVVGFSITISLAKTFALKYGY). At 371-373 (SVD) the chain is on the cytoplasmic side. The chain crosses the membrane as a helical span at residues 374 to 391 (GNQELIALGLCNFVSSFF). The Extracellular portion of the chain corresponds to 392–399 (HTFVVTAS). Residues 400 to 409 (MSRSLVQEST) form a helical membrane-spanning segment. Salicylate is bound at residue serine 401. Over 410-413 (GGHT) the chain is Cytoplasmic. A helical transmembrane segment spans residues 414–435 (EIAGLLASLLVLLVVVAIGFVF). Over 436-439 (QPLP) the chain is Extracellular. A helical transmembrane segment spans residues 440–467 (TTVLAAIIMVNLLGMFKQTRDIPVLWRK). A topological domain (cytoplasmic) is located at residue serine 468. Residues 469–484 (KIELAIWLVSFFASVL) traverse the membrane as a helical segment. The Extracellular portion of the chain corresponds to 485 to 486 (LG). A helical membrane pass occupies residues 487–507 (LDYGLAVAMAFAILTVIYRTQ). The tract at residues 508 to 731 (RPKNVVLGQI…AVLQCKRWRD (224 aa)) is extended region for STAS domain. Topologically, residues 508-739 (RPKNVVLGQI…RDLPVHPNIH (232 aa)) are cytoplasmic. The STAS domain maps to 528–726 (EYEEAEECSG…PTIHDAVLQC (199 aa)).

It belongs to the SLC26A/SulP transporter (TC 2.A.53) family. Homodimer. Interacts (via STAS domain) with CALM; this interaction is calcium-dependent. Expressed in hair cells of the auditory organs.

Its subcellular location is the cell membrane. The catalysed reaction is oxalate(in) + chloride(out) = oxalate(out) + chloride(in). It carries out the reaction sulfate(out) + chloride(in) = sulfate(in) + chloride(out). Sulfate/chloride antiport activity is inhibited by salicylate; this inhibition is reversible. Functionally, electrogenic antiporter that exchanges sulfate or oxalate for chloride ion in a strictly coupled manner with a 1:1 stoichiometry. Adopts a dynamic conformation, which alternates between the exposure of the central binding site to the extra- and intracellular solutions leading to an inward-to-outward conformational transition during the transport cycle. Generates voltage-dependent charge movements resembling to the non-linear capacitance (NLC) of the cell membrane, but which are not associated to electromotile activity. This chain is Prestin, found in Danio rerio (Zebrafish).